Here is a 581-residue protein sequence, read N- to C-terminus: Bestrophin-1 (581 aa).

At 1–31 (MTVTYSSQVANARLGSFSRLLLCWRGSIYKL) the chain is on the cytoplasmic side. Position 10 (A10) interacts with Ca(2+). A helical transmembrane segment spans residues 32 to 51 (LYGEFLIFLLCYYIIRFIYR). The Extracellular segment spans residues 52–60 (MALTDEQQV). A helical membrane pass occupies residues 61-82 (IFEKLTLYCDSYIQLIPISFVL). Residues 83-237 (GFYVTLVVTR…DWISVPLVYT (155 aa)) are Cytoplasmic-facing. Residues 238–255 (QVVTVAVYSFFLACLVGR) form a helical membrane-spanning segment. Topologically, residues 256-274 (QFLNPAKAYPGHEMDLVVP) are extracellular. The chain crosses the membrane as a helical span at residues 275–288 (LFTFLQFFFYAGWL). Topologically, residues 289–581 (KVAEQLINPF…ALENRDEAHS (293 aa)) are cytoplasmic. Residues Q293, N296, D301, and D304 each coordinate Ca(2+). A disordered region spans residues 416-440 (EGHFHEGHPKNLRGARLDSSDQEDS).

The protein belongs to the anion channel-forming bestrophin (TC 1.A.46) family. Calcium-sensitive chloride channel subfamily. Interacts with YWHAG; this interaction promotes the ligand-gated L-glutamate channel activity leading to the positive regulation of NMDA glutamate receptor activity through the L-glutamate secretion. Post-translationally, phosphorylated (in vitro). In terms of processing, dephosphorylated (in vitro) by PP2A.

It is found in the cell membrane. It localises to the basolateral cell membrane. It catalyses the reaction chloride(in) = chloride(out). The enzyme catalyses hydrogencarbonate(in) = hydrogencarbonate(out). The catalysed reaction is 4-aminobutanoate(in) = 4-aminobutanoate(out). It carries out the reaction L-glutamate(out) = L-glutamate(in). Ligand-gated anion channel that allows the movement of anions across cell membranes when activated by calcium (Ca2+). Allows the movement of chloride and hydrogencarbonate. Found in a partially open conformation leading to significantly smaller chloride movement. Upon F2R/PAR-1 activation, the sequestered calcium is released into the cytosol of astrocytes, leading to the (Ca2+)-dependent release of L-glutamate into the synaptic cleft that targets the neuronal postsynaptic GRIN2A/NMDAR receptor resulting in the synaptic plasticity regulation. Upon activation of the norepinephrine-alpha-1 adrenergic receptor signaling pathway, transports as well D-serine than L-glutamate in a (Ca2+)-dependent manner, leading to activation of adjacent NMDAR receptors and therefore regulates the heterosynaptic long-term depression and metaplasticity during initial memory acquisition. Releases the 4-aminobutanoate neurotransmitter in a (Ca2+)-dependent manner, and participates in its tonic release from cerebellar glial cells. This is Bestrophin-1 from Sus scrofa (Pig).